Reading from the N-terminus, the 279-residue chain is Lectin 9 (279 aa).

The signal sequence occupies residues 1-23; it reads MALSSALIKIFITFLFLQNHVNS. N-linked (GlcNAc...) asparagine glycosylation is found at Asn-116, Asn-139, Asn-235, and Asn-272.

Belongs to the leguminous lectin family.

Functionally, may be involved in arbuscular mycorrhizal (AM) symbiosis with AM fungi. In Medicago truncatula (Barrel medic), this protein is Lectin 9.